Here is a 390-residue protein sequence, read N- to C-terminus: F-box/kelch-repeat protein At4g39753 (390 aa).

The segment covering 1–16 (MVTFWAETAASAATTS) has biased composition (low complexity). A disordered region spans residues 1–33 (MVTFWAETAASAATTSKGEPPSKKRKTNPSPPP). In terms of domain architecture, F-box spans 32–79 (PPSLLSLPDVLILNCLSRIPKSYYPKLSIVSKTFRDLIISIDLNHARF). Kelch repeat units follow at residues 139–192 (PLLV…VFDR), 193–243 (KIYV…MIQG), 245–286 (FYVR…WYSC), and 288–321 (PNSF…LIET).

In Arabidopsis thaliana (Mouse-ear cress), this protein is F-box/kelch-repeat protein At4g39753.